The chain runs to 333 residues: DNA-directed RNA polymerase subunit alpha (333 aa).

Residues 1–233 are alpha N-terminal domain (alpha-NTD); that stretch reads MVREKIRVST…DLFIPFLHAE (233 aa). Residues 269–333 are alpha C-terminal domain (alpha-CTD); it reads IALKYIFIDQ…DILEMEKNFA (65 aa).

It belongs to the RNA polymerase alpha chain family. In plastids the minimal PEP RNA polymerase catalytic core is composed of four subunits: alpha, beta, beta', and beta''. When a (nuclear-encoded) sigma factor is associated with the core the holoenzyme is formed, which can initiate transcription.

The protein localises to the plastid. It localises to the chloroplast. The enzyme catalyses RNA(n) + a ribonucleoside 5'-triphosphate = RNA(n+1) + diphosphate. Its function is as follows. DNA-dependent RNA polymerase catalyzes the transcription of DNA into RNA using the four ribonucleoside triphosphates as substrates. This chain is DNA-directed RNA polymerase subunit alpha, found in Cucumis sativus (Cucumber).